Reading from the N-terminus, the 157-residue chain is Transcriptional repressor NrdR (157 aa).

A zinc finger lies at 3–34 (CPFCGHMESQVKDSRPSEDGAAIRRRRLCPEC). The 91-residue stretch at 49 to 139 (LTIVKRSGRR…VYRDFRETSD (91 aa)) folds into the ATP-cone domain.

Belongs to the NrdR family. Zn(2+) serves as cofactor.

Its function is as follows. Negatively regulates transcription of bacterial ribonucleotide reductase nrd genes and operons by binding to NrdR-boxes. This Caulobacter sp. (strain K31) protein is Transcriptional repressor NrdR.